Reading from the N-terminus, the 562-residue chain is Protein wntless (562 aa).

Residues 1 to 13 (MSGTILENLSGRK) are Cytoplasmic-facing. A helical transmembrane segment spans residues 14-34 (LSILVTTLLLCQVLCFLLGGL). Residues 35–239 (YAPLPAGHVT…AIHQNGGFTQ (205 aa)) are Lumenal-facing. N-linked (GlcNAc...) asparagine glycosylation occurs at asparagine 58. The chain crosses the membrane as a helical span at residues 240–260 (IWLLLKTVLFPFVVGIMIWFW). Topologically, residues 261–270 (RRVHLLQRSP) are cytoplasmic. The chain crosses the membrane as a helical span at residues 271-291 (ALLEYMLIYLGAALTFLNLPL). The Lumenal segment spans residues 292–311 (EYLSLVFEMPYMLLLSDIRQ). Residues 312-332 (GIFYAMLLTFWLVFAGEHMLI) traverse the membrane as a helical segment. The Cytoplasmic portion of the chain corresponds to 333–344 (QDAPNKSTIRSR). A helical membrane pass occupies residues 345–365 (YWKHLSAVVVGCISLFVFDIC). Topologically, residues 366-390 (ERGVQLRNPFYSIWAMPLAAKMAMT) are lumenal. Residues 391–411 (FIVLAGVSAAIYFLFLCYMIW) form a helical membrane-spanning segment. The Cytoplasmic segment spans residues 412–441 (KVFRNIGDKRTSLPSMSQARRLHYESLIYR). A helical membrane pass occupies residues 442-462 (FKFLMLATIVCAALTVTGFIM). Over 463–482 (GQRAEGQWDWNDNVAIQPTS) the chain is Lumenal. A helical membrane pass occupies residues 483–503 (AFLTGVYGMWNIYIFALLILY). The Cytoplasmic portion of the chain corresponds to 504–562 (APSHKQWPTMHHSDETTQSNENIVASAASEEIEFSHLPSDSNPSEISSLTSFTRKVAFD). Positions 539–562 (HLPSDSNPSEISSLTSFTRKVAFD) are disordered. Residues 541 to 556 (PSDSNPSEISSLTSFT) show a composition bias toward polar residues.

It belongs to the wntless family. Interacts with wg; in the Golgi. Interacts with Vps35, a component of the retromer complex; wls stability is regulated by Vps35.

The protein localises to the presynaptic cell membrane. Its subcellular location is the postsynaptic cell membrane. It is found in the cell membrane. It localises to the endoplasmic reticulum membrane. The protein resides in the endosome membrane. The protein localises to the golgi apparatus membrane. In terms of biological role, a segment polarity gene required for wingless (wg)-dependent patterning processes, acting in both wg-sending cells and wg-target cells. In non-neuronal cells wls directs wg secretion. The wls traffic loop encompasses the Golgi, the cell surface, an endocytic compartment and a retrograde route leading back to the Golgi, and involves clathrin-mediated endocytosis and the retromer complex (a conserved protein complex consisting of Vps35 and Vps26). In neuronal cells (the larval motorneuron NMJ), the wg signal moves across the synapse via the release of wls-containing exosome-like vesicles. Postsynaptic wls is required for the trafficking of fz2 through the fz2-interacting protein Grip. In Drosophila erecta (Fruit fly), this protein is Protein wntless.